The chain runs to 411 residues: Putative competence-damage inducible protein (411 aa).

This sequence belongs to the CinA family.

The chain is Putative competence-damage inducible protein from Alkaliphilus metalliredigens (strain QYMF).